The primary structure comprises 382 residues: Alcohol dehydrogenase 4 (382 aa).

Asp40, Asn72, Gly99, Ser100, Thr139, Thr140, Thr148, Phe150, Lys161, and Gly183 together coordinate NAD(+). The Fe(2+) site is built by Asp195, His199, and His264. NAD(+) is bound by residues His268 and His278. Residue His278 coordinates Fe(2+).

It belongs to the iron-containing alcohol dehydrogenase family. Homodimer. Requires Zn(2+) as cofactor. Fe(2+) is required as a cofactor.

The protein localises to the mitochondrion. The enzyme catalyses a primary alcohol + NAD(+) = an aldehyde + NADH + H(+). It catalyses the reaction ethanol + NAD(+) = acetaldehyde + NADH + H(+). Its activity is regulated as follows. Inhibited by EDTA. In terms of biological role, alcohol dehydrogenase specific for ethanol. Acts mainyl as a mitochondrial formaldehyde dehydrogenase and has no effect on ethanol production. Shows drastically reduced activity towards primary alcohols from 4 carbon atoms upward. Isomers of aliphatic alcohol, as well as secondary alcohols and glycerol are not used at all. The role of ADH4 in yeast metabolism is not yet known, but ADH4 is not responsible for the production of ethanol during growth on glucose nor responsible for the oxidation of ethanol to acetaldehyde. The polypeptide is Alcohol dehydrogenase 4 (Saccharomyces cerevisiae (strain ATCC 204508 / S288c) (Baker's yeast)).